Here is a 583-residue protein sequence, read N- to C-terminus: Zinc finger protein 277 (583 aa).

2 consecutive C2H2-type zinc fingers follow at residues leucine 351–histidine 375 and histidine 482–histidine 508.

Belongs to the ZNF277 family. In terms of assembly, interacts (via zinc-finger domains) with RPS2/40S ribosomal protein S2, perhaps as nascent RPS2 is synthesized during translation; the interaction is direct; the interaction is extra-ribosomal. Interaction with RPS2 competes with the binding of RPS2 to protein arginine methyltransferase PRMT3. Interacts with Polycomb group (PcG) complex protein BMI1. May be part of a complex including at least ZNF277, BMI1 and RNF2/RING2.

The protein localises to the nucleus. It is found in the cytoplasm. It localises to the nucleolus. Its subcellular location is the chromosome. In terms of biological role, probable transcription factor. Involved in modulation of cellular senescence; represses transcription of the tumor suppressor gene INK4A/ARF, perhaps acting via the Polycomb group (PcG) complex PRC1. The chain is Zinc finger protein 277 from Mus musculus (Mouse).